We begin with the raw amino-acid sequence, 302 residues long: Myb-related protein Hv33 (302 aa).

HTH myb-type domains are found at residues 11–63 (QPKV…INYL) and 64–118 (RPDL…KKKL). DNA-binding regions (H-T-H motif) lie at residues 39–63 (WSSV…INYL) and 91–114 (WSQI…NSCI). The segment at 137 to 158 (ATAAAALPDAEEEDRKPLCPAV) is disordered.

Germinating seed and apical meristem of shoot and root.

It localises to the nucleus. Possible transcription activator in response to an external signal. May be involved in the regulation of flavonoid biosynthesis. This Hordeum vulgare (Barley) protein is Myb-related protein Hv33 (MYB2).